A 612-amino-acid polypeptide reads, in one-letter code: Methionine--tRNA ligase (612 aa).

The short motif at 12–22 (PYANGPRHIGH) is the 'HIGH' region element. Zn(2+)-binding residues include cysteine 144, cysteine 147, cysteine 157, and cysteine 160. The 'KMSKS' region motif lies at 350-354 (KFSSS). Position 353 (serine 353) interacts with ATP. The interval 580-612 (IQPGTQLSKPKPLFPKLDPELAETGPEWAPVQK) is disordered.

This sequence belongs to the class-I aminoacyl-tRNA synthetase family. MetG type 1 subfamily. Monomer. Zn(2+) serves as cofactor.

Its subcellular location is the cytoplasm. It catalyses the reaction tRNA(Met) + L-methionine + ATP = L-methionyl-tRNA(Met) + AMP + diphosphate. Is required not only for elongation of protein synthesis but also for the initiation of all mRNA translation through initiator tRNA(fMet) aminoacylation. The protein is Methionine--tRNA ligase of Corynebacterium jeikeium (strain K411).